Reading from the N-terminus, the 186-residue chain is Potassium-transporting ATPase KdpC subunit (186 aa).

The helical transmembrane segment at 10–30 (LTIITMVLCGFLFPLAITLIG) threads the bilayer.

It belongs to the KdpC family. As to quaternary structure, the system is composed of three essential subunits: KdpA, KdpB and KdpC.

The protein resides in the cell membrane. Its function is as follows. Part of the high-affinity ATP-driven potassium transport (or Kdp) system, which catalyzes the hydrolysis of ATP coupled with the electrogenic transport of potassium into the cytoplasm. This subunit acts as a catalytic chaperone that increases the ATP-binding affinity of the ATP-hydrolyzing subunit KdpB by the formation of a transient KdpB/KdpC/ATP ternary complex. This Staphylococcus aureus (strain bovine RF122 / ET3-1) protein is Potassium-transporting ATPase KdpC subunit.